The sequence spans 447 residues: MSQNHTILQSLPVGQKVGIAFSGGLDTSAALLWMKLKGALPYAYTANLGQPDEDDYNAIPKKAMEYGAENARLIDCRAQLAHEGIAAIQCGAFHVSTGGIAYFNTTPLGRAVTGTMLVSAMKEDDVNIWGDGSTYKGNDIERFYRYGLLTNPALKIYKPWLDQQFIDELGGRHEMSEFLIANGFNYKMSVEKAYSTDSNMLGATHEAKDLEFLNSGIKIVKPIMGVAFWDENVEVSPEEVSVRFEEGVPVALNGKEYADPVELFLEANRIGGRHGLGMSDQIENRIIEAKSRGIYEAPGMALFHIAYERLVTGIHNEDTIEQYRINGLRLGRLLYQGRWFDSQALMLRETAQRWVAKAITGEVTLELRRGNDYSILNTESPNLTYQPERLSMEKVEDAAFTPLDRIGQLTMRNLDITDTRAKLGIYSQSGLLSLGEGSVLPQLGNKQ.

Residues 20-28 (AFSGGLDTS) and Ala46 each bind ATP. Tyr102 contacts L-citrulline. The ATP site is built by Gly132 and Thr134. Residues Thr134, Asn138, and Asp139 each coordinate L-aspartate. Asn138 serves as a coordination point for L-citrulline. Asp139 is an ATP binding site. Arg142 and Ser195 together coordinate L-citrulline. Asp197 provides a ligand contact to ATP. Positions 204, 206, and 283 each coordinate L-citrulline.

The protein belongs to the argininosuccinate synthase family. Type 2 subfamily. In terms of assembly, homotetramer.

The protein localises to the cytoplasm. The enzyme catalyses L-citrulline + L-aspartate + ATP = 2-(N(omega)-L-arginino)succinate + AMP + diphosphate + H(+). It functions in the pathway amino-acid biosynthesis; L-arginine biosynthesis; L-arginine from L-ornithine and carbamoyl phosphate: step 2/3. This is Argininosuccinate synthase from Neisseria meningitidis serogroup C (strain 053442).